The primary structure comprises 202 residues: Recombination protein RecR (202 aa).

Residues 58–73 (CANCGNLTDKKLCDIC) form a C4-type zinc finger. The 98-residue stretch at 81–178 (SVITVVEDSM…KVSRIAMGVP (98 aa)) folds into the Toprim domain.

This sequence belongs to the RecR family.

Its function is as follows. May play a role in DNA repair. It seems to be involved in an RecBC-independent recombinational process of DNA repair. It may act with RecF and RecO. The protein is Recombination protein RecR of Finegoldia magna (strain ATCC 29328 / DSM 20472 / WAL 2508) (Peptostreptococcus magnus).